We begin with the raw amino-acid sequence, 473 residues long: Zinc transporter SLC39A7 (473 aa).

Residues 11 to 31 (VAVGLLTWAALGLLVAGHGGH) form a helical membrane-spanning segment. Composition is skewed to basic and acidic residues over residues 44-56 (GHSH…DFHH) and 66-114 (HTHE…EHSH). The tract at residues 44–120 (GHSHRHSHED…EHSHGGYGES (77 aa)) is disordered. Pros-methylhistidine is present on histidine 66. 3 helical membrane passes run 138–158 (ALGA…LIPV), 169–189 (LQIL…LHLI), and 214–234 (GPIL…LVVE). The disordered stretch occupies residues 243 to 316 (GHEHSHGHGH…QHSGEEKAGS (74 aa)). 2 positions are modified to phosphoserine: serine 278 and serine 279. The segment covering 298-316 (RPKDGPVRPQHSGEEKAGS) has biased composition (basic and acidic residues). A helical membrane pass occupies residues 388–408 (LLTAVGALAGTAFALLTEGGA). Positions 428 to 473 (GDQAATQASPRSTSLPPVGEEDFREDPGPRQKGQQEKSGINVNCVS) are disordered. Positions 431–442 (AATQASPRSTSL) are enriched in polar residues. The span at 452–462 (EDPGPRQKGQQ) shows a compositional bias: basic and acidic residues. A compositionally biased stretch (polar residues) spans 463-473 (EKSGINVNCVS).

Belongs to the ZIP transporter (TC 2.A.5) family. KE4/Catsup subfamily. Homodimer. Methylation at some His residue by METTL9 leads to reduced zinc-binding. Post-translationally, rapidly phosphorylated by CK2 following Zn(2+) treatment. This phosphorylation is required for efficient cytosolic Zn(2+) release.

It localises to the endoplasmic reticulum membrane. The protein resides in the golgi apparatus. Its subcellular location is the cis-Golgi network membrane. It catalyses the reaction Zn(2+)(in) = Zn(2+)(out). In terms of biological role, transports Zn(2+) from the endoplasmic reticulum (ER)/Golgi apparatus to the cytosol, playing an essential role in the regulation of cytosolic zinc levels. Acts as a gatekeeper of zinc release from intracellular stores, requiring post-translational activation by phosphorylation on residues, resulting in activation of multiple downstream pathways leading to cell growth and proliferation. Has an essential role in B cell development and is required for proper B cell receptor signaling. Plays an important role in maintaining intestinal epithelial homeostasis and skin dermis development by regulating ER function. Controls cell signaling pathways involved in glucose metabolism in skeletal muscle. Has a protective role against ER stress in different biological contexts. Mediates Zn(2+)-induced ferroptosis. The sequence is that of Zinc transporter SLC39A7 (SLC39A7) from Sus scrofa (Pig).